A 1178-amino-acid chain; its full sequence is DNA-directed RNA polymerase subunit beta (1178 aa).

Residues 1–37 (MLEGCILPDFGQSKTDVSPSQSRPQSSPNNSVPGAPN) form a disordered region. Residues 17 to 33 (VSPSQSRPQSSPNNSVP) are compositionally biased toward low complexity.

This sequence belongs to the RNA polymerase beta chain family. In terms of assembly, the RNAP catalytic core consists of 2 alpha, 1 beta, 1 beta' and 1 omega subunit. When a sigma factor is associated with the core the holoenzyme is formed, which can initiate transcription.

It carries out the reaction RNA(n) + a ribonucleoside 5'-triphosphate = RNA(n+1) + diphosphate. Its function is as follows. DNA-dependent RNA polymerase catalyzes the transcription of DNA into RNA using the four ribonucleoside triphosphates as substrates. The sequence is that of DNA-directed RNA polymerase subunit beta from Mycobacterium leprae (strain Br4923).